Here is a 172-residue protein sequence, read N- to C-terminus: Myosin regulatory light chain 2, smooth muscle minor isoform (172 aa).

The residue at position 2 (S2) is an N-acetylserine. The residue at position 19 (T19) is a Phosphothreonine; by MLCK. Residue S20 is modified to Phosphoserine; by MLCK. EF-hand domains are found at residues 29–64 (SQIQEFKEAFNMIDQNRDGFIDKEDLHDMLASLGKN), 98–133 (DPEDVIRNAFACFDEEATGFIQEDYLRELLTTMGDR), and 134–169 (FTDEEVDELYREAPIDKKGNFNYIEFTRILKHGAKD). Residues D42, N44, D46, and D53 each coordinate Ca(2+).

As to quaternary structure, myosin is a hexamer of 2 heavy chains and 4 light chains. In terms of processing, phosphorylation increases the actin-activated myosin ATPase activity and thereby regulates the contractile activity.

Its function is as follows. Myosin regulatory subunit that plays an important role in regulation of both smooth muscle and nonmuscle cell contractile activity. Implicated in cytokinesis, receptor capping, and cell locomotion. This Gallus gallus (Chicken) protein is Myosin regulatory light chain 2, smooth muscle minor isoform.